We begin with the raw amino-acid sequence, 23 residues long: Clavanin-B (23 aa).

The residue at position 23 (phenylalanine 23) is a Phenylalanine amide.

Its subcellular location is the secreted. Its function is as follows. Has antimicrobial activity. The sequence is that of Clavanin-B from Styela clava (Sea squirt).